A 246-amino-acid chain; its full sequence is MILQAWRSLQLLYLLEAISLLPCTEALLCYEATASAFRAVSLHNWKWLLLRSMVCNQREGCEETVVFIETGTSKGVLSFKGCSSAFSYPPQISYLVSPPGVSIASYSRVCRSYLCNNLTNLEPFVRLKASQPMSTLPSAKSCPSCVGKHDQECLPSFVTTENCPFAASSCYSSTLKFQAGNLNTTFLIMGCARDSHKLLADFQHIGSIRVTEVINVLDKSEAVSAGHCSQGISWSVLLCLLILLRD.

An N-terminal signal peptide occupies residues methionine 1–alanine 26. Asparagine 117 is a glycosylation site (N-linked (GlcNAc...) asparagine). The region spanning cysteine 142–valine 223 is the UPAR/Ly6 domain. Alanine 225 carries the GPI-anchor amidated alanine lipid modification. Positions glycine 226–aspartate 246 are cleaved as a propeptide — removed in mature form.

The protein resides in the cell membrane. The sequence is that of Ly6/PLAUR domain-containing protein 4 (Lypd4) from Mus musculus (Mouse).